A 356-amino-acid polypeptide reads, in one-letter code: Carminomycin 4-O-methyltransferase DauK (356 aa).

Arg-153 contacts S-adenosyl-L-methionine. Asp-163 contacts substrate. Residues Gly-187, Glu-210, Asp-237 to Phe-238, and Ser-252 each bind S-adenosyl-L-methionine. 2 residues coordinate substrate: Asn-257 and Arg-303.

The protein belongs to the class I-like SAM-binding methyltransferase superfamily. Cation-independent O-methyltransferase family. As to quaternary structure, homodimer and homotetramer in equilibrium.

The enzyme catalyses carminomycin + S-adenosyl-L-methionine = daunorubicin + S-adenosyl-L-homocysteine + H(+). It participates in antibiotic biosynthesis; daunorubicin biosynthesis. The protein operates within antibiotic biosynthesis; carminomycin biosynthesis. Strongly inhibited by S-adenosyl-L-homocysteine and weakly by adenine and methionine. In terms of biological role, involved in the biosynthesis of the anthracyclines carminomycin and daunorubicin (daunomycin) which are aromatic polyketide antibiotics that exhibit high cytotoxicity and are widely applied in the chemotherapy of a variety of cancers. In vivo, catalyzes the transfer of a methyl group from S-adenosyl-L-methionine to the 4-O-position of carminomycin to form daunorubicin. In vitro, it also methylates the anthracyclines rhodomycin D (10-carbomethoxy-13-deoxycarminomycin), 10-carboxy-13-deoxycarminomycin, 13-deoxy-carminomycin and 13-dihydrocarminomycin at the 4-hydroxyl position. This chain is Carminomycin 4-O-methyltransferase DauK (dauK), found in Streptomyces sp. (strain C5).